The sequence spans 356 residues: DNA polymerase IV (356 aa).

In terms of domain architecture, UmuC spans 7–188 (IIHIDMDCFY…LPLKKIPRVG (182 aa)). The Mg(2+) site is built by Asp11 and Asp106. The active site involves Glu107.

This sequence belongs to the DNA polymerase type-Y family. Monomer. Requires Mg(2+) as cofactor.

It is found in the cytoplasm. It carries out the reaction DNA(n) + a 2'-deoxyribonucleoside 5'-triphosphate = DNA(n+1) + diphosphate. Its function is as follows. Poorly processive, error-prone DNA polymerase involved in untargeted mutagenesis. Copies undamaged DNA at stalled replication forks, which arise in vivo from mismatched or misaligned primer ends. These misaligned primers can be extended by PolIV. Exhibits no 3'-5' exonuclease (proofreading) activity. May be involved in translesional synthesis, in conjunction with the beta clamp from PolIII. The polypeptide is DNA polymerase IV (Actinobacillus pleuropneumoniae serotype 5b (strain L20)).